Here is a 331-residue protein sequence, read N- to C-terminus: Vitamin B12 import system permease protein BtuC (331 aa).

9 consecutive transmembrane segments (helical) span residues 20–42 (VMLA…FLSP), 62–84 (LVAA…VLLG), 91–113 (GVLG…LPVM), 117–136 (TVFM…ILVG), 148–170 (MLLV…FYFS), 190–209 (SWHH…WLCL), 240–262 (LAIS…VGLV), 277–296 (FLLP…SDIW), and 303–325 (SAEL…WMLI).

This sequence belongs to the binding-protein-dependent transport system permease family. FecCD subfamily. In terms of assembly, the complex is composed of two ATP-binding proteins (BtuD), two transmembrane proteins (BtuC) and a solute-binding protein (BtuF).

The protein localises to the cell inner membrane. Part of the ABC transporter complex BtuCDF involved in vitamin B12 import. Involved in the translocation of the substrate across the membrane. In Vibrio vulnificus (strain CMCP6), this protein is Vitamin B12 import system permease protein BtuC.